The sequence spans 525 residues: Neutrophil cytosol factor 2 (525 aa).

3 TPR repeats span residues 37 to 70 (SRIC…DKHS), 71 to 104 (AVAY…LRGN), and 121 to 154 (CEVL…KSEP). Threonine 233 carries the phosphothreonine modification. The SH3 1 domain maps to 240 to 299 (LEGEAHRVLFGFVPETPEELQVMPGNIVFVLKKGSDNWATVMFNGQKGLVPCNYLEPVEL). The interval 304-343 (QSQPQEDTSPESDIPPPPNSSPPGRLQLSPGHKQKEPKEL) is disordered. Residues serine 324 and serine 398 each carry the phosphoserine modification. The region spanning 350–428 (PYMLKVHYKY…YCLTLWCEHT (79 aa)) is the PB1 domain. The segment at 437-457 (EPIQRENSDASKQTTEPQPKE) is disordered. Residues 456-515 (KEGTQVVAIFSYEAAQPEDLEFVEGDVILVLSHVNEEWLEGECKGKVGIFPKAFVEGCAA) enclose the SH3 2 domain.

It belongs to the NCF2/NOXA1 family. As to quaternary structure, component of the phagocyte NADPH oxidase complex composed of an obligatory core heterodimer formed by the membrane proteins CYBA and CYBB and the cytosolic regulatory subunits NCF1/p47-phox, NCF2/p67-phox, NCF4/p40-phox and the small GTPase RAC1 or RAC2. Part of a cytosolic complex composed at least by NCF1, NCF2 and NCF4. Interacts with NCF4. Interacts (via the C-terminal SH3 domain) with NCF1 (via C-terminus). Interacts with SYTL1 and RAC1. May interact with NOXO1. Interacts with S100A8 and calprotectin (S100A8/9). Interacts with GBP7 (via GB1/RHD3-type G domain). Interacts with CYBB; the interaction is enhanced in the presence of GBP7.

The protein resides in the cytoplasm. In terms of biological role, NCF2, NCF1, and a membrane bound cytochrome b558 are required for activation of the latent NADPH oxidase (necessary for superoxide production). Subunit of the phagocyte NADPH oxidase complex that mediates the transfer of electrons from cytosolic NADPH to O2 to produce the superoxide anion (O2(-)). In the activated complex, electrons are first transferred from NADPH to flavin adenine dinucleotide (FAD) and subsequently transferred via two heme molecules to molecular oxygen, producing superoxide through an outer-sphere reaction. Activation of the NADPH oxidase complex is initiated by the assembly of cytosolic subunits of the NADPH oxidase complex with the core NADPH oxidase complex to form a complex at the plasma membrane or phagosomal membrane. This activation process is initiated by phosphorylation dependent binding of the cytosolic NCF1/p47-phox subunit to the C-terminus of CYBA/p22-phox. The sequence is that of Neutrophil cytosol factor 2 from Mus musculus (Mouse).